The primary structure comprises 93 residues: Pyrimidine/purine nucleoside phosphorylase (93 aa).

Belongs to the nucleoside phosphorylase PpnP family.

The enzyme catalyses a purine D-ribonucleoside + phosphate = a purine nucleobase + alpha-D-ribose 1-phosphate. It carries out the reaction adenosine + phosphate = alpha-D-ribose 1-phosphate + adenine. It catalyses the reaction cytidine + phosphate = cytosine + alpha-D-ribose 1-phosphate. The catalysed reaction is guanosine + phosphate = alpha-D-ribose 1-phosphate + guanine. The enzyme catalyses inosine + phosphate = alpha-D-ribose 1-phosphate + hypoxanthine. It carries out the reaction thymidine + phosphate = 2-deoxy-alpha-D-ribose 1-phosphate + thymine. It catalyses the reaction uridine + phosphate = alpha-D-ribose 1-phosphate + uracil. The catalysed reaction is xanthosine + phosphate = alpha-D-ribose 1-phosphate + xanthine. In terms of biological role, catalyzes the phosphorolysis of diverse nucleosides, yielding D-ribose 1-phosphate and the respective free bases. Can use uridine, adenosine, guanosine, cytidine, thymidine, inosine and xanthosine as substrates. Also catalyzes the reverse reactions. The protein is Pyrimidine/purine nucleoside phosphorylase of Vibrio atlanticus (strain LGP32) (Vibrio splendidus (strain Mel32)).